Consider the following 297-residue polypeptide: Ribosomal protein L11 methyltransferase (297 aa).

Residues Thr-150, Gly-171, Asp-193, and Asn-233 each contribute to the S-adenosyl-L-methionine site.

Belongs to the methyltransferase superfamily. PrmA family.

The protein resides in the cytoplasm. The catalysed reaction is L-lysyl-[protein] + 3 S-adenosyl-L-methionine = N(6),N(6),N(6)-trimethyl-L-lysyl-[protein] + 3 S-adenosyl-L-homocysteine + 3 H(+). In terms of biological role, methylates ribosomal protein L11. This is Ribosomal protein L11 methyltransferase from Laribacter hongkongensis (strain HLHK9).